The following is a 454-amino-acid chain: ESX-1 secretion-associated protein EspB (454 aa).

Disordered regions lie at residues 17–40 (RADEVEAPMATPPTDVPQAPSGLT), 82–128 (GEVE…AGES), and 391–454 (AGQG…QDNK). The segment covering 391–422 (AGQGGGAAGRGMAGGGMGMPMGGAGQGQGGAK) has biased composition (gly residues).

It belongs to the EspB family. In terms of processing, cleaved at close to the C-terminus during secretion.

Its subcellular location is the secreted. The polypeptide is ESX-1 secretion-associated protein EspB (Mycobacterium marinum (strain ATCC BAA-535 / M)).